Consider the following 207-residue polypeptide: Thiamine-phosphate synthase (207 aa).

Residues 38–42 and Asn-70 each bind 4-amino-2-methyl-5-(diphosphooxymethyl)pyrimidine; that span reads QYRAK. Asp-71 and Asp-90 together coordinate Mg(2+). Position 109 (Thr-109) interacts with 4-amino-2-methyl-5-(diphosphooxymethyl)pyrimidine. 135–137 serves as a coordination point for 2-[(2R,5Z)-2-carboxy-4-methylthiazol-5(2H)-ylidene]ethyl phosphate; sequence TNS. Lys-138 is a binding site for 4-amino-2-methyl-5-(diphosphooxymethyl)pyrimidine. 2-[(2R,5Z)-2-carboxy-4-methylthiazol-5(2H)-ylidene]ethyl phosphate-binding positions include Gly-165 and 185-186; that span reads IS.

The protein belongs to the thiamine-phosphate synthase family. Mg(2+) is required as a cofactor.

It catalyses the reaction 2-[(2R,5Z)-2-carboxy-4-methylthiazol-5(2H)-ylidene]ethyl phosphate + 4-amino-2-methyl-5-(diphosphooxymethyl)pyrimidine + 2 H(+) = thiamine phosphate + CO2 + diphosphate. The enzyme catalyses 2-(2-carboxy-4-methylthiazol-5-yl)ethyl phosphate + 4-amino-2-methyl-5-(diphosphooxymethyl)pyrimidine + 2 H(+) = thiamine phosphate + CO2 + diphosphate. The catalysed reaction is 4-methyl-5-(2-phosphooxyethyl)-thiazole + 4-amino-2-methyl-5-(diphosphooxymethyl)pyrimidine + H(+) = thiamine phosphate + diphosphate. The protein operates within cofactor biosynthesis; thiamine diphosphate biosynthesis; thiamine phosphate from 4-amino-2-methyl-5-diphosphomethylpyrimidine and 4-methyl-5-(2-phosphoethyl)-thiazole: step 1/1. In terms of biological role, condenses 4-methyl-5-(beta-hydroxyethyl)thiazole monophosphate (THZ-P) and 2-methyl-4-amino-5-hydroxymethyl pyrimidine pyrophosphate (HMP-PP) to form thiamine monophosphate (TMP). The sequence is that of Thiamine-phosphate synthase from Clostridium perfringens (strain SM101 / Type A).